The chain runs to 155 residues: Putative pre-16S rRNA nuclease (155 aa).

The protein belongs to the YqgF nuclease family.

Its subcellular location is the cytoplasm. In terms of biological role, could be a nuclease involved in processing of the 5'-end of pre-16S rRNA. This chain is Putative pre-16S rRNA nuclease, found in Wolbachia pipientis wMel.